Reading from the N-terminus, the 377-residue chain is Probable sensor histidine kinase HK (377 aa).

Disordered stretches follow at residues 1–169 (MAHP…RPAD) and 346–377 (LPTP…TSDQ). Over residues 10–54 (RLQRRHGARSGSSRCRHRRPVPRRRSRSRPRWRAARAHRRHHRRS) the composition is skewed to basic residues. The span at 84-98 (RRPDPRGGANTDHHA) shows a compositional bias: basic and acidic residues. Composition is skewed to basic residues over residues 99 to 115 (APRH…RRRD) and 137 to 146 (TTVRRRRQPR). The Histidine kinase domain occupies 146-350 (RITHPVGTAD…ELRITLPTPR (205 aa)). Residue His-149 is modified to Phosphohistidine; by autocatalysis. Basic and acidic residues predominate over residues 352-377 (PFHEELPRITSSDTKDPNREHDTSDQ).

Post-translationally, autophosphorylated.

The catalysed reaction is ATP + protein L-histidine = ADP + protein N-phospho-L-histidine.. Functionally, member of the two-component system HK/TcrA. Phosphorylates TcrA. The polypeptide is Probable sensor histidine kinase HK (Mycobacterium tuberculosis (strain CDC 1551 / Oshkosh)).